A 313-amino-acid polypeptide reads, in one-letter code: D-alanine--D-alanine ligase (313 aa).

One can recognise an ATP-grasp domain in the interval 108–308 (KLVWQQLGIP…YQELVVKVLA (201 aa)). 138–193 (VAKLGLPLFVKPASEGSSVAVIKVKTADALVPALEEAVKFDKIVVVEKSIEGGGEY) contributes to the ATP binding site. Residues aspartate 262, glutamate 275, and asparagine 277 each contribute to the Mg(2+) site.

It belongs to the D-alanine--D-alanine ligase family. It depends on Mg(2+) as a cofactor. The cofactor is Mn(2+).

It is found in the cytoplasm. It carries out the reaction 2 D-alanine + ATP = D-alanyl-D-alanine + ADP + phosphate + H(+). It functions in the pathway cell wall biogenesis; peptidoglycan biosynthesis. Cell wall formation. This is D-alanine--D-alanine ligase from Paraburkholderia phymatum (strain DSM 17167 / CIP 108236 / LMG 21445 / STM815) (Burkholderia phymatum).